The sequence spans 90 residues: RNA-binding protein Hfq (90 aa).

Residues 9 to 69 (DRFLNHLRVN…ISTIIPSSYV (61 aa)) enclose the Sm domain.

Belongs to the Hfq family. Homohexamer.

Functionally, RNA chaperone that binds small regulatory RNA (sRNAs) and mRNAs to facilitate mRNA translational regulation in response to envelope stress, environmental stress and changes in metabolite concentrations. Also binds with high specificity to tRNAs. The chain is RNA-binding protein Hfq from Thermotoga sp. (strain RQ2).